The chain runs to 304 residues: MPELALLEEVVEKVRPLLGQGKVADYIPALASVDAGKIGIAVTTVDGETLGAGDYLEPFSIQSISKVFSLTLALTLYEEAEIWSRVGKEPSGHSFNSLVQVELERGKPRNPFINAGALVIADLLQSRLGAPKHRMLELVRQLSQNDKVCFDKQVADSEYQHSARNAAIAYLMKSFGNFQGDVDTVLRTYFHYCALKMNCADLSKAMLYLANRGKSITGTELISQVQTRQLNALLATSGLYDGAGEFAYRVGMPGKSGVGGGIIAVIPGELSICVWSPELDGNGNSLAGTAMLEHLSQRLGRSIF.

Substrate is bound by residues serine 63, asparagine 114, glutamate 158, asparagine 165, tyrosine 189, tyrosine 240, and valine 258.

It belongs to the glutaminase family. In terms of assembly, homotetramer.

It carries out the reaction L-glutamine + H2O = L-glutamate + NH4(+). The chain is Glutaminase from Shewanella baltica (strain OS155 / ATCC BAA-1091).